A 431-amino-acid polypeptide reads, in one-letter code: Gamma-glutamyl phosphate reductase (431 aa).

The protein belongs to the gamma-glutamyl phosphate reductase family.

Its subcellular location is the cytoplasm. It carries out the reaction L-glutamate 5-semialdehyde + phosphate + NADP(+) = L-glutamyl 5-phosphate + NADPH + H(+). It functions in the pathway amino-acid biosynthesis; L-proline biosynthesis; L-glutamate 5-semialdehyde from L-glutamate: step 2/2. Functionally, catalyzes the NADPH-dependent reduction of L-glutamate 5-phosphate into L-glutamate 5-semialdehyde and phosphate. The product spontaneously undergoes cyclization to form 1-pyrroline-5-carboxylate. In Methylobacterium nodulans (strain LMG 21967 / CNCM I-2342 / ORS 2060), this protein is Gamma-glutamyl phosphate reductase.